A 215-amino-acid polypeptide reads, in one-letter code: Histidine biosynthesis bifunctional protein HisIE (215 aa).

Positions 1 to 118 (MTKSISIEHL…YKNDVALLQI (118 aa)) are phosphoribosyl-AMP cyclohydrolase. Residues 119–215 (IPQVSAKIKE…HVEKEGQQRE (97 aa)) form a phosphoribosyl-ATP pyrophosphohydrolase region.

This sequence in the N-terminal section; belongs to the PRA-CH family. It in the C-terminal section; belongs to the PRA-PH family.

The protein localises to the cytoplasm. It carries out the reaction 1-(5-phospho-beta-D-ribosyl)-ATP + H2O = 1-(5-phospho-beta-D-ribosyl)-5'-AMP + diphosphate + H(+). The catalysed reaction is 1-(5-phospho-beta-D-ribosyl)-5'-AMP + H2O = 1-(5-phospho-beta-D-ribosyl)-5-[(5-phospho-beta-D-ribosylamino)methylideneamino]imidazole-4-carboxamide. It functions in the pathway amino-acid biosynthesis; L-histidine biosynthesis; L-histidine from 5-phospho-alpha-D-ribose 1-diphosphate: step 2/9. The protein operates within amino-acid biosynthesis; L-histidine biosynthesis; L-histidine from 5-phospho-alpha-D-ribose 1-diphosphate: step 3/9. The chain is Histidine biosynthesis bifunctional protein HisIE from Oceanobacillus iheyensis (strain DSM 14371 / CIP 107618 / JCM 11309 / KCTC 3954 / HTE831).